A 608-amino-acid polypeptide reads, in one-letter code: Translation initiation factor RLI1 (608 aa).

2 4Fe-4S ferredoxin-type domains span residues 7-39 (RIAIVSADKCKPKKCRQECKRSCPVVKTGKLCI) and 46-75 (KIAFISEILCIGCGICVKKCPFDAIQIINL). ABC transporter domains follow at residues 70 to 320 (IQII…FLDG) and 345 to 568 (LQND…LKNL). 110-117 (GTNGIGKS) lines the ATP pocket. Phosphoserine is present on Ser-349. 385–392 (GENGTGKT) is a binding site for ATP.

The protein belongs to the ABC transporter superfamily. ABCE family. As to quaternary structure, component of the multifactor complex (MFC) composed of at least RLI1, the eIF2 subunit SUI2, TIF5/eIF5, and the eIF3 subunits PRT1, HCR1, NIP1, RPG1, TIF34 and TIF35. The complex associates with pre-initiation complexes. Interacts with the complex YAE1:LTO1; the complex bridges the interaction between the CIA complex and RLI1.

It localises to the cytoplasm. The protein resides in the nucleus. Functionally, component of the multifactor complex (MFC) involved in translation initiation. Required for the binding of MFC to the 40S ribosome. Required for the processing and nuclear export of the 60S and 40S ribosomal subunits. This is Translation initiation factor RLI1 (RLI1) from Saccharomyces cerevisiae (strain ATCC 204508 / S288c) (Baker's yeast).